The following is a 104-amino-acid chain: Snakin-2 (104 aa).

The signal sequence occupies residues 1–23 (MAISKALFASLLLSLLLLEQVQS). A propeptide spans 24 to 38 (IQTDQVTSNAISEAA) (removed in mature form).

Belongs to the GASA family. In terms of processing, six disulfide bonds may be present. Expressed in tubers, stems, flowers, shoot apex and leaves, but not in roots or stolons.

Its subcellular location is the secreted. It is found in the cell wall. Its function is as follows. Has an antimicrobial activity. Causes a rapid aggregation of both Gram-positive and Gram-negative bacteria, but the antimicrobial activity is not correlated with the capacity to aggregate bacteria. This chain is Snakin-2 (SN2), found in Solanum tuberosum (Potato).